An 84-amino-acid polypeptide reads, in one-letter code: UPF0473 protein CPF_2030 (84 aa).

The protein belongs to the UPF0473 family.

The protein is UPF0473 protein CPF_2030 of Clostridium perfringens (strain ATCC 13124 / DSM 756 / JCM 1290 / NCIMB 6125 / NCTC 8237 / Type A).